A 617-amino-acid polypeptide reads, in one-letter code: Probable endochitinase (617 aa).

Residues 53–426 (YIRPCYFTNW…SVIAKELGGV (374 aa)) enclose the GH18 domain. Cys-57 and Cys-82 form a disulfide bridge. Residues 109–110 (DW) and 136–139 (GGWS) contribute to the chitin site. Glu-179 serves as the catalytic Proton donor. Chitin-binding positions include Tyr-180 and 245 to 248 (MSYD). A glycan (N-linked (GlcNAc...) asparagine) is linked at Asn-310. Chitin is bound at residue Trp-394. Chitin-binding type-2 domains follow at residues 478 to 534 (TNVC…GCSV) and 563 to 617 (AFKC…KCAK). Disulfide bonds link Cys-511-Cys-524 and Cys-594-Cys-607.

The protein belongs to the glycosyl hydrolase 18 family. Chitinase class II subfamily.

It catalyses the reaction Random endo-hydrolysis of N-acetyl-beta-D-glucosaminide (1-&gt;4)-beta-linkages in chitin and chitodextrins.. This chain is Probable endochitinase (cht-1), found in Caenorhabditis elegans.